A 331-amino-acid chain; its full sequence is Protein mono-ADP-ribosyltransferase PARP11 (331 aa).

Lysine 11 carries the post-translational modification N6-(ADP-ribosyl)lysine. Positions 15 to 99 (SDVDDMDTSD…VTGKQRLIKR (85 aa)) constitute a WWE domain. Cysteine 49 and cysteine 65 each carry ADP-ribosylcysteine. Residue aspartate 80 is modified to ADP-ribosyl aspartic acid. One can recognise a PARP catalytic domain in the interval 116 to 331 (IPMPTHWENV…IYPEYLIDFH (216 aa)).

Belongs to the ARTD/PARP family. Auto-mono-ADP-ribosylated. Predominantly expressed in testis, preferentially in postmeiotic germ cells. Also detectable in other tissues, including liver, lung, spleen, thymus and brain.

It localises to the nucleus. It is found in the nuclear pore complex. The enzyme catalyses L-aspartyl-[protein] + NAD(+) = 4-O-(ADP-D-ribosyl)-L-aspartyl-[protein] + nicotinamide. The catalysed reaction is L-cysteinyl-[protein] + NAD(+) = S-(ADP-D-ribosyl)-L-cysteinyl-[protein] + nicotinamide + H(+). It carries out the reaction L-glutamyl-[protein] + NAD(+) = 5-O-(ADP-D-ribosyl)-L-glutamyl-[protein] + nicotinamide. It catalyses the reaction L-lysyl-[protein] + NAD(+) = N(6)-(ADP-D-ribosyl)-L-lysyl-[protein] + nicotinamide + H(+). Its function is as follows. Mono-ADP-ribosyltransferase that mediates mono-ADP-ribosylation of target proteins. Plays a role in nuclear envelope stability and nuclear remodeling during spermiogenesis. Inhibits the type I interferon activated signaling pathway. Mechanistically, mono-ADP-ribosylates beta-TrCP/BTRC to promote IFNAR1 ubiquitination and protect BTRC from ubiquitin-proteasome degradation. The sequence is that of Protein mono-ADP-ribosyltransferase PARP11 from Mus musculus (Mouse).